A 473-amino-acid polypeptide reads, in one-letter code: Xylosidase/arabinosidase (473 aa).

Catalysis depends on Asp-18, which acts as the Proton acceptor. The Proton donor role is filled by Glu-209.

Belongs to the glycosyl hydrolase 43 family. In terms of assembly, homotetramer.

It catalyses the reaction Hydrolysis of (1-&gt;4)-beta-D-xylans, to remove successive D-xylose residues from the non-reducing termini.. The enzyme catalyses Hydrolysis of terminal non-reducing alpha-L-arabinofuranoside residues in alpha-L-arabinosides.. This Thermoclostridium stercorarium (Clostridium stercorarium) protein is Xylosidase/arabinosidase (xylA).